Here is a 510-residue protein sequence, read N- to C-terminus: GMP synthase [glutamine-hydrolyzing] (510 aa).

The region spanning 5–195 (LVLILDFGGQ…LYEVCHCQGD (191 aa)) is the Glutamine amidotransferase type-1 domain. C82 acts as the Nucleophile in catalysis. Catalysis depends on residues H169 and E171. Residues 196-385 (WTMENYIEKE…LGVPEEIVWR (190 aa)) form the GMPS ATP-PPase domain. An ATP-binding site is contributed by 223-229 (SGGVDSS).

In terms of assembly, homodimer.

The catalysed reaction is XMP + L-glutamine + ATP + H2O = GMP + L-glutamate + AMP + diphosphate + 2 H(+). It participates in purine metabolism; GMP biosynthesis; GMP from XMP (L-Gln route): step 1/1. Catalyzes the synthesis of GMP from XMP. The polypeptide is GMP synthase [glutamine-hydrolyzing] (Alkaliphilus metalliredigens (strain QYMF)).